Here is a 422-residue protein sequence, read N- to C-terminus: Glutamate-1-semialdehyde 2,1-aminomutase (422 aa).

K264 carries the post-translational modification N6-(pyridoxal phosphate)lysine.

It belongs to the class-III pyridoxal-phosphate-dependent aminotransferase family. HemL subfamily. In terms of assembly, homodimer. Pyridoxal 5'-phosphate serves as cofactor.

The protein resides in the cytoplasm. It catalyses the reaction (S)-4-amino-5-oxopentanoate = 5-aminolevulinate. Its pathway is porphyrin-containing compound metabolism; protoporphyrin-IX biosynthesis; 5-aminolevulinate from L-glutamyl-tRNA(Glu): step 2/2. In Clostridium tetani (strain Massachusetts / E88), this protein is Glutamate-1-semialdehyde 2,1-aminomutase.